The following is a 362-amino-acid chain: Chorismate synthase (362 aa).

Residues Arg47 and Arg53 each contribute to the NADP(+) site. FMN is bound by residues 124–126, Gly285, 300–304, and Arg326; these read RSS and KPTAT.

Belongs to the chorismate synthase family. In terms of assembly, homotetramer. The cofactor is FMNH2.

The catalysed reaction is 5-O-(1-carboxyvinyl)-3-phosphoshikimate = chorismate + phosphate. It functions in the pathway metabolic intermediate biosynthesis; chorismate biosynthesis; chorismate from D-erythrose 4-phosphate and phosphoenolpyruvate: step 7/7. Functionally, catalyzes the anti-1,4-elimination of the C-3 phosphate and the C-6 proR hydrogen from 5-enolpyruvylshikimate-3-phosphate (EPSP) to yield chorismate, which is the branch point compound that serves as the starting substrate for the three terminal pathways of aromatic amino acid biosynthesis. This reaction introduces a second double bond into the aromatic ring system. This Cyanothece sp. (strain PCC 7425 / ATCC 29141) protein is Chorismate synthase.